The following is a 305-amino-acid chain: THAP domain-containing protein 11 (305 aa).

Residues 1-80 (MPGFTCCVPG…TYTVRVPTIF (80 aa)) form a THAP-type zinc finger. The segment at 85–135 (VNERKVARRPAGAAAARRRQQQQQQQQQQQQQQQLQQQQPSPSSSTAQTTQ) is disordered. The span at 105 to 135 (QQQQQQQQQQQQQQLQQQQPSPSSSTAQTTQ) shows a compositional bias: low complexity. Positions 234–237 (DHSY) match the HCFC1-binding motif (HBM) motif. Residues 246-296 (EELLRKLNEQRDILALMEVKMKEMKGSIRHLRLTEAKLREELREKDRLLAM) adopt a coiled-coil conformation.

It belongs to the THAP11 family. Forms homodimers. Interacts via HBM with HCFC1. Forms a complex with HCFC1 and ZNF143. Mainly expressed in embryonic pluripotent cells. In adult tissues, expressed in oocytes and in certain regions of the brain,including hippocampus, olfactory bulb and Purkinje cells.

The protein resides in the nucleus. The protein localises to the cytoplasm. Transcriptional repressor that plays a central role for embryogenesis and the pluripotency of embryonic stem (ES) cells. Sequence-specific DNA-binding factor that represses gene expression in pluripotent ES cells by directly binding to key genetic loci and recruiting epigenetic modifiers. Required for normal brain development and neural precursor differentiation. Its function is as follows. Transcription factor, which has both transcriptional activation and repression activities. Also modulates chromatin accessibility. In complex with HCFC1 and ZNF143, regulates the expression of several genes, including AP2S1, ESCO2, OPHN1, RBL1, UBXN8 and ZNF32. May regulate the expression of genes that encode both cytoplasmic and mitochondrial ribosomal proteins. Required for normal mitochondrial development and function. Regulates mitochondrial gene expression, including that of components of the electron transport chain. Involved in the maintainance of pluripotency in early embryonic cells, possibly through its action on mitochondrial maturation which is required to meet high energy demands of these cells. Required for early development of retina, preventing premature exit of retinal progenitor cells from the cell cycle. This effect may also be mediated by its action on mitochondria. Through the regulation of MMACHC gene expression, controls cobalamin metabolism. Required for normal brain development and neural precursor differentiation. Involved in cell growth. The protein is THAP domain-containing protein 11 (Thap11) of Mus musculus (Mouse).